The following is a 312-amino-acid chain: Olfactory receptor 2J1 (312 aa).

Residues 1–26 (MLMKKNASFEDFFLLLGFSNWPHLEV) are Extracellular-facing. N6 carries an N-linked (GlcNAc...) asparagine glycan. A helical transmembrane segment spans residues 27 to 50 (VLFVVILIFYLITLIGNLFIIILS). Over 51–58 (YLDSHLHT) the chain is Cytoplasmic. The chain crosses the membrane as a helical span at residues 59 to 80 (PMYFFLSNLSFLDLCYTTSSIP). The Extracellular segment spans residues 81-101 (QLLVNLWGPEKTISYAGCTVQ). A disulfide bridge links C98 with C190. The chain crosses the membrane as a helical span at residues 102–121 (LYFVLALGTAECVLLVVMSY). The Cytoplasmic segment spans residues 122 to 140 (DRYAAVCRPLHYTVLMHPR). Residues 141-159 (FCRLLAAASWVSGFTTSAL) traverse the membrane as a helical segment. The Extracellular portion of the chain corresponds to 160 to 196 (HSSFTFWIPLCRHRLVDHFFCEVPALLRLSCVDTQAN). A helical transmembrane segment spans residues 197–220 (ELTLMVMSSIFVLIPLILILTSYG). The Cytoplasmic portion of the chain corresponds to 221–237 (AIARAVLSMQSTTGLQK). The helical transmembrane segment at 238 to 260 (VLRTCGAHLMVVSLFFIPVMCMY) threads the bilayer. Residues 261–273 (LQPPSENSQDQGK) lie on the Extracellular side of the membrane. The helical transmembrane segment at 274 to 293 (FIALFYTVVTPSLNPLIYTF) threads the bilayer. The Cytoplasmic portion of the chain corresponds to 294–312 (RNKDVRGAVKRLMGWEWGM).

The protein belongs to the G-protein coupled receptor 1 family.

The protein localises to the cell membrane. Functionally, odorant receptor. This chain is Olfactory receptor 2J1 (OR2J1), found in Homo sapiens (Human).